The following is a 436-amino-acid chain: MANPVVAIVGRPNVGKSTIFNRLAGERISIVEDTPGVTRDRIYARTEWLGHPFNLIDTGGIDIGDEPFLTQITEQAEIAIEEADVIIFVVSVKEGVTDADEKVARILYRTDKPVVLAVNKVDNPELRADIYDFYSLGFGEPIPVAGTHGIGTGDLLDKIIKEFPKDATNEEDDSIKFSFIGRPNVGKSSLVNAILGENRVIVSNIEGTTRDAIDTRFETEDGTKYTMIDTAGIRKKGKVYENTEKYSVLRAMRAIDRSDVVCVVLNAEEGIREQDKHVAGYAHEAGRAIVIVVNKWDTLKKDNKTMSDFENLIRQEFQYLSYAPIVFVSAKTKQRLDKLPELIKRVNDNHEQRISSAVLNDVVMDAIAHNPTPTDNGKRLRIYYATQVAIKPPTFVIFVNDPELMHFSYERFLENQIREAFDFEGTPIHIIERRRK.

EngA-type G domains follow at residues 4-167 (PVVA…PKDA) and 175-351 (IKFS…DNHE). Residues 10–17 (GRPNVGKS), 57–61 (DTGGI), 119–122 (NKVD), 181–188 (GRPNVGKS), 229–233 (DTAGI), and 294–297 (NKWD) contribute to the GTP site. Residues 352–436 (QRISSAVLND…PIHIIERRRK (85 aa)) form the KH-like domain.

It belongs to the TRAFAC class TrmE-Era-EngA-EngB-Septin-like GTPase superfamily. EngA (Der) GTPase family. Associates with the 50S ribosomal subunit.

Functionally, GTPase that plays an essential role in the late steps of ribosome biogenesis. The polypeptide is GTPase Der (Ligilactobacillus salivarius (strain UCC118) (Lactobacillus salivarius)).